Reading from the N-terminus, the 326-residue chain is JNK1/MAPK8-associated membrane protein homolog (326 aa).

Over 1–71 the chain is Lumenal; the sequence is MSSLSGHAST…CESCDTPLQP (71 aa). N-linked (GlcNAc...) asparagine glycosylation occurs at Asn-27. Residues 72–92 traverse the membrane as a helical segment; sequence YDWMYLLFIALLPLLLHMQFI. The Cytoplasmic segment spans residues 93–108; sequence RIARKYCRTRYYEVSE. Residues 109–129 traverse the membrane as a helical segment; it reads YLCVILENVIACVIAVLIYPP. Residues 130–166 are Lumenal-facing; the sequence is RFTFFLNGCSKTDIKEWYPACYNPRIGYTKTMRCTYE. The chain crosses the membrane as a helical span at residues 167 to 187; that stretch reads VVFPLYSITFIHHLILIGSIL. The Cytoplasmic portion of the chain corresponds to 188–208; the sequence is VLRSTLYCVLLYKTYNGKPFY. 2 helical membrane-spanning segments follow: residues 209–229 and 230–250; these read AAIV…GVVF and YTFP…HLAL. At 251 to 269 the chain is on the cytoplasmic side; that stretch reads EGKRPLKEMIVRIATSPTH. The helical transmembrane segment at 270-290 threads the bilayer; that stretch reads LIFLSITMLMLSFGVIAIIAP. The Lumenal portion of the chain corresponds to 291–296; the sequence is LDIPYR. Residues 297–317 traverse the membrane as a helical segment; that stretch reads WSFLCIVPVPFIFYMATIPFS. Over 318 to 326 the chain is Cytoplasmic; sequence NPTTTMRLS.

The protein localises to the endoplasmic reticulum membrane. Functionally, facilitates degradation of misfolded endoplasmic reticulum (ER) proteins through the recruitment of components of the proteasome and endoplasmic reticulum-associated degradation (ERAD) system. Involved in ER stress response. The protein is JNK1/MAPK8-associated membrane protein homolog of Caenorhabditis elegans.